Consider the following 678-residue polypeptide: DNA ligase (678 aa).

NAD(+)-binding positions include 34–38 (DSEYD), 83–84 (SL), and E114. The N6-AMP-lysine intermediate role is filled by K116. R137, E176, K293, and K317 together coordinate NAD(+). The Zn(2+) site is built by C411, C414, C429, and C435. The BRCT domain occupies 594–678 (PTRQPLNGES…LMAGYGQTLS (85 aa)).

It belongs to the NAD-dependent DNA ligase family. LigA subfamily. Requires Mg(2+) as cofactor. It depends on Mn(2+) as a cofactor.

The enzyme catalyses NAD(+) + (deoxyribonucleotide)n-3'-hydroxyl + 5'-phospho-(deoxyribonucleotide)m = (deoxyribonucleotide)n+m + AMP + beta-nicotinamide D-nucleotide.. DNA ligase that catalyzes the formation of phosphodiester linkages between 5'-phosphoryl and 3'-hydroxyl groups in double-stranded DNA using NAD as a coenzyme and as the energy source for the reaction. It is essential for DNA replication and repair of damaged DNA. This chain is DNA ligase, found in Acinetobacter baumannii (strain AB307-0294).